We begin with the raw amino-acid sequence, 434 residues long: Protein HEAT INTOLERANT 4 (434 aa).

The short motif at 1–8 is the Nuclear localization signal 1 element; the sequence is MKKGAKRK. Positions 1–15 are enriched in basic residues; the sequence is MKKGAKRKGVSKAGR. The segment at 1 to 131 is disordered; the sequence is MKKGAKRKGV…PVPKAKKPRA (131 aa). The segment covering 30–53 has biased composition (basic and acidic residues); that stretch reads ETTKTTQEESQQHEEEVVDEVKEN. Over residues 54-82 the composition is skewed to acidic residues; it reads GEEEEAKGDQEEEEDAKPDSLEEDEENQE. Basic and acidic residues predominate over residues 83–98; that stretch reads DEVKAEEVKEEVEKKP. The Nuclear localization signal 2 signature appears at 95 to 102; it reads EKKPVARR. Basic residues predominate over residues 99–110; the sequence is VARRGGKRKRAT. Positions 111-122 are enriched in basic and acidic residues; it reads KKDTEIKDEKKP. Residues 363 to 394 adopt a coiled-coil conformation; the sequence is VKEQVRAAKKANREAKDARKKAIEEMSEDTKQ. The Nuclear localization signal 3 motif lies at 370-377; sequence AKKANREA.

It localises to the nucleus. Its subcellular location is the nucleolus. Essential protein required for basal thermotolerance, especially during heat-induced chromocentre decondensation, thus regulating transcriptional gene silencing (TGS). In Arabidopsis thaliana (Mouse-ear cress), this protein is Protein HEAT INTOLERANT 4.